The primary structure comprises 253 residues: DNA repair protein RecO (253 aa).

The protein belongs to the RecO family.

Involved in DNA repair and RecF pathway recombination. This is DNA repair protein RecO from Staphylococcus epidermidis (strain ATCC 35984 / DSM 28319 / BCRC 17069 / CCUG 31568 / BM 3577 / RP62A).